Consider the following 234-residue polypeptide: Sugar fermentation stimulation protein homolog (234 aa).

This sequence belongs to the SfsA family.

The protein is Sugar fermentation stimulation protein homolog of Pectobacterium carotovorum subsp. carotovorum (strain PC1).